The chain runs to 426 residues: Histidine--tRNA ligase (426 aa).

The protein belongs to the class-II aminoacyl-tRNA synthetase family.

It is found in the cytoplasm. It carries out the reaction tRNA(His) + L-histidine + ATP = L-histidyl-tRNA(His) + AMP + diphosphate + H(+). The sequence is that of Histidine--tRNA ligase from Saccharolobus islandicus (strain M.16.27) (Sulfolobus islandicus).